Reading from the N-terminus, the 356-residue chain is Stomatin-like protein 2, mitochondrial (356 aa).

The transit peptide at 1-28 (MLARAARGTGALLLKGSVQASARAPRRA) directs the protein to the mitochondrion. Phosphoserine; by PKC/PRKCZ is present on serine 17. Tyrosine 124 carries the phosphotyrosine modification. Lysine 145 is subject to N6-acetyllysine; alternate. Residue lysine 145 is modified to N6-succinyllysine; alternate. Positions 215–252 (INVAEGKKQAQILASEAEKAEQINQAAGEASAVLAKAK) form a coiled coil. Residue lysine 233 is modified to N6-acetyllysine. The disordered stretch occupies residues 326–356 (EAQDSVSSRSSRDVRSTDASLDEELDRVKLS). The residue at position 330 (serine 330) is a Phosphoserine.

It belongs to the band 7/mec-2 family. As to quaternary structure, forms homooligomers. Interacts with MFN2; may form heterooligomers with this mediator of mitochondrial fusion. Interacts with PHB1 and PHB2; stabilizes and recruits them to cardiolipin-enriched mitochondrial membranes. Interacts with CACNA2D2.

It localises to the cell membrane. The protein localises to the mitochondrion. It is found in the mitochondrion inner membrane. Its subcellular location is the mitochondrion intermembrane space. The protein resides in the membrane raft. It localises to the cytoplasm. The protein localises to the cytoskeleton. Functionally, mitochondrial protein that probably regulates the biogenesis and the activity of mitochondria. Stimulates cardiolipin biosynthesis, binds cardiolipin-enriched membranes where it recruits and stabilizes some proteins including prohibitin and may therefore act in the organization of functional microdomains in mitochondrial membranes. Through regulation of the mitochondrial function may play a role into several biological processes including cell migration, cell proliferation, T-cell activation, calcium homeostasis and cellular response to stress. May play a role in calcium homeostasis through negative regulation of calcium efflux from mitochondria. Required for mitochondrial hyperfusion a pro-survival cellular response to stress which results in increased ATP production by mitochondria. May also regulate the organization of functional domains at the plasma membrane and play a role in T-cell activation through association with the T-cell receptor signaling complex and its regulation. The sequence is that of Stomatin-like protein 2, mitochondrial (STOML2) from Bos taurus (Bovine).